The chain runs to 825 residues: 5E5 antigen (825 aa).

Residues 126 to 825 (LSRDGYETET…RPRPSPKSPR (700 aa)) form a disordered region. A compositionally biased stretch (pro residues) spans 157–180 (PRAPPEPPDPGAPRPPPDPGPLPL). A compositionally biased stretch (polar residues) spans 191–200 (VQVSTEQLLM). Residues 217 to 237 (TRGDRTQEGGEKPREQREGPR) are compositionally biased toward basic and acidic residues. Over residues 247–256 (QQEESPQQEP) the composition is skewed to low complexity. 3 stretches are compositionally biased toward basic and acidic residues: residues 257 to 277 (SSERGDSVGEREARSPGHEGE), 315 to 342 (VPKDRGEGGREWGPEAAQEHGEAARDWT), and 392 to 406 (QEREPGPRDRVESPR). Over residues 437-449 (RRPRKRRGRKGRM) the composition is skewed to basic residues. Over residues 455–477 (TTATSASATGGPAEEAGASAPEG) the composition is skewed to low complexity. Residues 485–505 (GRARGPRQQARRRHGPQRRRG) show a composition bias toward basic residues. The span at 524-536 (GTTSGEQRADQSQ) shows a compositional bias: polar residues. Over residues 537–562 (TLPALAGAPTAHAHAVPGPGPAAATL) the composition is skewed to low complexity. Over residues 565 to 575 (RGRRGSWRGGR) the composition is skewed to basic residues. The segment covering 576–588 (RGGGAGASGGGRG) has biased composition (gly residues). The span at 721–733 (FPPPPPTRPPPVL) shows a compositional bias: pro residues. Over residues 734 to 750 (LPLLRLTCAGDPGASRP) the composition is skewed to low complexity.

Expressed in neurons.

The protein resides in the nucleus. Functionally, might have DNA-binding ability. This Rattus norvegicus (Rat) protein is 5E5 antigen.